Consider the following 1222-residue polypeptide: MSEEQTAIDSPPSTVEGSVETVTTIDSPSTTASTIAATAEEHPQLEKKPTPLPSLKDLPSLGSNAAFANVKVSWGPNMKPAVSNSPSPSPSAPSLTTGLGAKRMRSKNIQEAFTLDLQSQLSITKPELSRIVQSVKKNHDVSVESTLSKNARTFLVSGVAANVHEAKRELVKKLTKPINAVIEVPSKCKASIIGSGGRTIREISDAYEVKINVSKEVNENSYDEDMDDTTSNVSLFGDFESVNLAKAKILAIVKEETKNATIKLVVEDEKYLPYIDVSEFASDEGDEEVKVQFYKKSGDIVILGPREKAKATKTSIQDYLKKLASNLDEEKVKIPSKFQFLIDAEELKEKYNVIVTFPSTPDDELVSFVGLRDKVGEAITYARSSSKSYVVESLDISKAHSKNLTHAKNLIMYFTKYSVLKGLEESHPNVKISLPSIQSLPTAETVTIHISAKSDEANDIKAVRKELISFVNNIPPSETLVITDLDYELFGGSIKHCLLASESSVAFVQFGDYYPNDNSILLVALTEDEDFKPSIEEIQASLNKANESLNSLRTKQNNMETKTYEFSEEVQDSLFKPSSATWKLIMEDISEQEGHLQIKLHTPEENQLTVRGDEKAAKAANKIFESILNSPSSKSKMTVNIPANSVARLIGNKGSNLQQIREKFACQIDIPNEENNNASKDKTVEVTLTGLEYNLTHAKKYLAAEAKKWADIITKELIVPVKFHGSLIGPHGTYRNRLQEKYNVFINFPRDNEIVTIRGPSRGVNKAHEELKALLDFEMENGHKMVINVPAEHVPRIIGKNGDNINDIRAEYGVEMDFLQKSTDPKAQETGEVELEITGSRQNIKDAAKRVESIVAEASDFVTEVLKIDHKYHKSIVGSGGHILREIISKAGGEEIRNKSVDIPNADSENKDITVQGPQKFVKKVVEEINKIVKDAENSVTKTIDIPAERKGALIGPGGIVRRQLESEFNINLFVPNKDDPSGKITITGAPENVEKAEKKILNEIIRENFDREVDVPASIYEYVSERGAFIQKLRMDLSVNVRFGNTSKKANKLARAPIEIPLEKVCGSTEGENAEKTKFTIEEVGAPTSSEEGDITMRLTYEPIDLSSILSDGEEKEVTKDTSNDSAKKEEALDTAVKLIKERIAKAPSATYAGYVWGADTRRFNMIVGPGGSNIKKIREAADVIINVPRKSDKVNDVVYIRGTKAGVEKAGEMVLKSLRR.

A compositionally biased stretch (polar residues) spans 1–12 (MSEEQTAIDSPP). Residues 1 to 59 (MSEEQTAIDSPPSTVEGSVETVTTIDSPSTTASTIAATAEEHPQLEKKPTPLPSLKDLP) form a disordered region. Positions 13 to 38 (STVEGSVETVTTIDSPSTTASTIAAT) are enriched in low complexity. A compositionally biased stretch (basic and acidic residues) spans 39-49 (AEEHPQLEKKP). Phosphothreonine is present on Thr50. A phosphoserine mark is found at Ser54, Ser63, Ser85, Ser87, and Ser89. The interval 79 to 98 (KPAVSNSPSPSPSAPSLTTG) is disordered. The 73-residue stretch at 177-249 (PINAVIEVPS…ESVNLAKAKI (73 aa)) folds into the KH 1 domain. Position 630 is a phosphoserine (Ser630). KH domains are found at residues 634–702 (KSKM…KKYL), 712–771 (IITK…HEEL), 782–851 (GHKM…AKRV), 861–929 (FVTE…VEEI), and 939–1001 (SVTK…EKKI). Ser1112 carries the post-translational modification Phosphoserine. The KH 7 domain maps to 1153 to 1216 (YAGYVWGADT…AGVEKAGEMV (64 aa)).

It is found in the endoplasmic reticulum membrane. It localises to the nucleus membrane. Involved in the control of mitotic chromosome transmission. Required during cell division for faithful partitioning of the ER-nuclear envelope membranes which, in S.cerevisiae, enclose the duplicated chromosomes. The sequence is that of Protein SCP160 (SCP160) from Saccharomyces cerevisiae (strain ATCC 204508 / S288c) (Baker's yeast).